Consider the following 403-residue polypeptide: Pantothenate kinase (403 aa).

3 positions are modified to phosphoserine: Ser-80, Ser-82, and Ser-84.

The protein belongs to the type II pantothenate kinase family.

It is found in the cytoplasm. It localises to the nucleus. The catalysed reaction is (R)-pantothenate + ATP = (R)-4'-phosphopantothenate + ADP + H(+). It functions in the pathway cofactor biosynthesis; coenzyme A biosynthesis; CoA from (R)-pantothenate: step 1/5. With respect to regulation, regulated by feedback inhibition by malonyl-CoA. Its function is as follows. Plays a role in the physiological regulation of the intracellular CoA concentration. In Schizosaccharomyces pombe (strain 972 / ATCC 24843) (Fission yeast), this protein is Pantothenate kinase.